A 383-amino-acid polypeptide reads, in one-letter code: Envelope glycoprotein D (383 aa).

The first 30 residues, 1 to 30 (MPAATMATPGYLACRTSVATLLFFVLLRRA), serve as a signal peptide directing secretion. Over 31 to 358 (AILGAGGAPS…PKVVGPTVGP (328 aa)) the chain is Virion surface. Cystine bridges form between Cys76/Cys197, Cys115/Cys212, and Cys127/Cys136. Positions 244–311 (YQDKLKVASP…TSASGVIEIE (68 aa)) are profusion. The tract at residues 315 to 349 (ESDVRLVSYPPPTLPSPGPGGNENGAGYSDNRPDP) is disordered. The segment covering 323 to 332 (YPPPTLPSPG) has biased composition (pro residues). A helical transmembrane segment spans residues 359-379 (GAIILVVMCAPILIGLTAFTI). The Intravirion segment spans residues 380-383 (RKYC).

The protein belongs to the herpesviridae glycoprotein D family.

It localises to the virion membrane. Envelope glycoprotein that binds to host cell entry receptors, promoting the virus entry into host cells. May trigger fusion with host membrane, by recruiting the fusion machinery composed of gB and gH/gL. This Amazona oratrix (yellow-headed parrot) protein is Envelope glycoprotein D (US6).